The primary structure comprises 335 residues: MPFTPLRPGVYAPTMTFFDPSTEDLDVPTIRKHAVRLAKAGLVGLVCMGSNGEAVHLTRAERKTVINETRSALVEAGFSNVPVIAGASEQSIRGTIELCKESYEAGAEYALIVPPSYYRYATGNDQTLYEFFTSVADGSPIPLILYNYPGAVAGIDMDSDLIIRISQHPNIVGTKFTCANTGKLTRVASALHAITPPSPLAPAQRKFPSTKTEANHPYVAFGGIADFSLQTLASGGSAILAGGANVIPKLCVQIFNLWSAGRFTEAMEAQELLSRADWVLTKAAIPGTKSAIQSYYGYGGFPRRPLARLSAEQAEAVAEKIKDAMEVEKSLPDIA.

Position 50–51 (50–51 (SN)) interacts with substrate. Catalysis depends on Lys-175, which acts as the Schiff-base intermediate with substrate.

The protein belongs to the DapA family.

It carries out the reaction 2-dehydro-3-deoxy-L-galactonate = L-glyceraldehyde + pyruvate. The protein operates within carbohydrate acid metabolism. Its function is as follows. Mediates the conversion of 2-dehydro-3-deoxy-L-galactonate to pyruvate and L-glyceraldehyde in D-galacturonate catabolic process. In Aspergillus niger, this protein is L-threo-3-deoxy-hexylosonate aldolase (gaaC).